Consider the following 527-residue polypeptide: GMP synthase [glutamine-hydrolyzing] (527 aa).

Residues 4 to 202 (KILILDFGSQ…VLKICGAQPD (199 aa)) enclose the Glutamine amidotransferase type-1 domain. The Nucleophile role is filled by C81. Residues H176 and E178 contribute to the active site. The GMPS ATP-PPase domain maps to 203–395 (WEMGHYIDEA…LGLPPAMVYR (193 aa)). Residue 230–236 (SGGVDSS) participates in ATP binding.

Homodimer.

The catalysed reaction is XMP + L-glutamine + ATP + H2O = GMP + L-glutamate + AMP + diphosphate + 2 H(+). Its pathway is purine metabolism; GMP biosynthesis; GMP from XMP (L-Gln route): step 1/1. Catalyzes the synthesis of GMP from XMP. This Paraburkholderia xenovorans (strain LB400) protein is GMP synthase [glutamine-hydrolyzing].